The primary structure comprises 309 residues: Methionyl-tRNA formyltransferase (309 aa).

107-110 (SLLP) lines the (6S)-5,6,7,8-tetrahydrofolate pocket.

It belongs to the Fmt family.

It carries out the reaction L-methionyl-tRNA(fMet) + (6R)-10-formyltetrahydrofolate = N-formyl-L-methionyl-tRNA(fMet) + (6S)-5,6,7,8-tetrahydrofolate + H(+). In terms of biological role, attaches a formyl group to the free amino group of methionyl-tRNA(fMet). The formyl group appears to play a dual role in the initiator identity of N-formylmethionyl-tRNA by promoting its recognition by IF2 and preventing the misappropriation of this tRNA by the elongation apparatus. The sequence is that of Methionyl-tRNA formyltransferase from Borrelia recurrentis (strain A1).